The following is a 243-amino-acid chain: UPF0758 protein sll0766 (243 aa).

Residues 113-235 enclose the MPN domain; the sequence is VVDSPEAAAI…HQSLRQCTDL (123 aa). His-184, His-186, and Asp-197 together coordinate Zn(2+). The JAMM motif signature appears at 184 to 197; sequence HNHPSGGLEPSPED.

It belongs to the UPF0758 family.

This Synechocystis sp. (strain ATCC 27184 / PCC 6803 / Kazusa) protein is UPF0758 protein sll0766.